Consider the following 188-residue polypeptide: HTH-type transcriptional repressor AcnR (188 aa).

Positions 10–70 constitute an HTH tetR-type domain; that stretch reads TNSRQEILEG…ALAREDAARM (61 aa). Positions 33-52 form a DNA-binding region, H-T-H motif; sequence TVRRLEEATGKSRGAIFHHF. Residues 79-80, Arg-130, and Asn-134 contribute to the citrate site; that span reads LV. A Mg(2+)-binding site is contributed by Glu-181. Arg-185 is a citrate binding site.

Homodimer.

AcnR negatively controls the expression of the aconitase gene acn. Binds to the imperfect inverted repeat in the acn promoter region. The polypeptide is HTH-type transcriptional repressor AcnR (Corynebacterium glutamicum (strain ATCC 13032 / DSM 20300 / JCM 1318 / BCRC 11384 / CCUG 27702 / LMG 3730 / NBRC 12168 / NCIMB 10025 / NRRL B-2784 / 534)).